The sequence spans 249 residues: Anamorsin homolog (249 aa).

The N-terminal SAM-like domain stretch occupies residues 1–130 (MEQFKDLQKS…ETGSAARLSF (130 aa)). A linker region spans residues 131 to 161 (AKKAAGVNVWKISGDDEELIDEEDLLDEADK). Cysteine 172, cysteine 181, cysteine 184, and cysteine 186 together coordinate [2Fe-2S] cluster. Residues 172–186 (CSTTGKRKACKNCSC) are fe-S binding site A. Residues cysteine 210, cysteine 213, cysteine 221, and cysteine 224 each coordinate [4Fe-4S] cluster. 2 short sequence motifs (cx2C motif) span residues 210–213 (CGNC) and 221–224 (CSTC). Positions 210 to 224 (CGNCYLGDAFRCSTC) are fe-S binding site B.

Belongs to the anamorsin family. As to quaternary structure, monomer. Requires [2Fe-2S] cluster as cofactor. It depends on [4Fe-4S] cluster as a cofactor.

The protein localises to the cytoplasm. It is found in the mitochondrion intermembrane space. In terms of biological role, component of the cytosolic iron-sulfur (Fe-S) protein assembly (CIA) machinery. Required for the maturation of extramitochondrial Fe-S proteins. Part of an electron transfer chain functioning in an early step of cytosolic Fe-S biogenesis, facilitating the de novo assembly of a [4Fe-4S] cluster on the cytosolic Fe-S scaffold complex. Electrons are transferred from NADPH via a FAD- and FMN-containing diflavin oxidoreductase. Together with the diflavin oxidoreductase, also required for the assembly of the diferric tyrosyl radical cofactor of ribonucleotide reductase (RNR), probably by providing electrons for reduction during radical cofactor maturation in the catalytic small subunit. This is Anamorsin homolog from Drosophila grimshawi (Hawaiian fruit fly).